The following is a 296-amino-acid chain: Lipoyl synthase (296 aa).

[4Fe-4S] cluster-binding residues include Cys37, Cys42, Cys48, Cys63, Cys67, Cys70, and Ser276. Positions 49–265 constitute a Radical SAM core domain; it reads WSKKHATMMI…ERVARTKGFL (217 aa).

This sequence belongs to the radical SAM superfamily. Lipoyl synthase family. Requires [4Fe-4S] cluster as cofactor.

The protein localises to the cytoplasm. The catalysed reaction is [[Fe-S] cluster scaffold protein carrying a second [4Fe-4S](2+) cluster] + N(6)-octanoyl-L-lysyl-[protein] + 2 oxidized [2Fe-2S]-[ferredoxin] + 2 S-adenosyl-L-methionine + 4 H(+) = [[Fe-S] cluster scaffold protein] + N(6)-[(R)-dihydrolipoyl]-L-lysyl-[protein] + 4 Fe(3+) + 2 hydrogen sulfide + 2 5'-deoxyadenosine + 2 L-methionine + 2 reduced [2Fe-2S]-[ferredoxin]. It functions in the pathway protein modification; protein lipoylation via endogenous pathway; protein N(6)-(lipoyl)lysine from octanoyl-[acyl-carrier-protein]: step 2/2. In terms of biological role, catalyzes the radical-mediated insertion of two sulfur atoms into the C-6 and C-8 positions of the octanoyl moiety bound to the lipoyl domains of lipoate-dependent enzymes, thereby converting the octanoylated domains into lipoylated derivatives. In Rickettsia canadensis (strain McKiel), this protein is Lipoyl synthase.